A 186-amino-acid chain; its full sequence is Catechol O-methyltransferase (186 aa).

S-adenosyl-L-methionine contacts are provided by residues Val-7, Glu-29, Ser-37, Glu-55, Leu-56, 82–85 (GASQ), Ser-84, and Asp-106. A Mg(2+)-binding site is contributed by Asp-106. Residue Lys-109 coordinates substrate. Asp-134 and Asn-135 together coordinate Mg(2+). Positions 135 and 164 each coordinate substrate. Ser-182 carries the phosphoserine modification.

This sequence belongs to the class I-like SAM-binding methyltransferase superfamily. Cation-dependent O-methyltransferase family. The cofactor is Mg(2+).

Its subcellular location is the cytoplasm. The protein localises to the cell membrane. The enzyme catalyses a catechol + S-adenosyl-L-methionine = a guaiacol + S-adenosyl-L-homocysteine + H(+). The catalysed reaction is 2-hydroxyestrone + S-adenosyl-L-methionine = 2-hydroxy-3-methoxy-estrone + S-adenosyl-L-homocysteine + H(+). It catalyses the reaction 4-hydroxyestrone + S-adenosyl-L-methionine = 4-methoxyestrone + S-adenosyl-L-homocysteine + H(+). It carries out the reaction 2-hydroxyestrone + S-adenosyl-L-methionine = 2-methoxyestrone + S-adenosyl-L-homocysteine + H(+). The enzyme catalyses 4-hydroxy-17beta-estradiol + S-adenosyl-L-methionine = 4-methoxy-17beta-estradiol + S-adenosyl-L-homocysteine + H(+). The catalysed reaction is 2-hydroxy-17beta-estradiol + S-adenosyl-L-methionine = 2-hydroxy-3-methoxy-17beta-estradiol + S-adenosyl-L-homocysteine + H(+). It catalyses the reaction 2-hydroxy-17beta-estradiol + S-adenosyl-L-methionine = 2-methoxy-17beta-estradiol + S-adenosyl-L-homocysteine + H(+). In terms of biological role, catalyzes the O-methylation, and thereby the inactivation, of catecholamine neurotransmitters and catechol hormones. Also shortens the biological half-lives of certain neuroactive drugs, like L-DOPA, alpha-methyl DOPA and isoproterenol. In Sus scrofa (Pig), this protein is Catechol O-methyltransferase (COMT).